The primary structure comprises 258 residues: Imidazole glycerol phosphate synthase subunit HisF (258 aa).

Residues D11 and D130 contribute to the active site.

Belongs to the HisA/HisF family. In terms of assembly, heterodimer of HisH and HisF.

The protein resides in the cytoplasm. It carries out the reaction 5-[(5-phospho-1-deoxy-D-ribulos-1-ylimino)methylamino]-1-(5-phospho-beta-D-ribosyl)imidazole-4-carboxamide + L-glutamine = D-erythro-1-(imidazol-4-yl)glycerol 3-phosphate + 5-amino-1-(5-phospho-beta-D-ribosyl)imidazole-4-carboxamide + L-glutamate + H(+). It participates in amino-acid biosynthesis; L-histidine biosynthesis; L-histidine from 5-phospho-alpha-D-ribose 1-diphosphate: step 5/9. Functionally, IGPS catalyzes the conversion of PRFAR and glutamine to IGP, AICAR and glutamate. The HisF subunit catalyzes the cyclization activity that produces IGP and AICAR from PRFAR using the ammonia provided by the HisH subunit. The protein is Imidazole glycerol phosphate synthase subunit HisF of Methylorubrum extorquens (strain CM4 / NCIMB 13688) (Methylobacterium extorquens).